Consider the following 67-residue polypeptide: Large ribosomal subunit protein bL31 (67 aa).

Zn(2+) contacts are provided by Cys16, Cys18, Cys36, and Cys39.

Belongs to the bacterial ribosomal protein bL31 family. Type A subfamily. As to quaternary structure, part of the 50S ribosomal subunit. The cofactor is Zn(2+).

Functionally, binds the 23S rRNA. This is Large ribosomal subunit protein bL31 from Syntrophomonas wolfei subsp. wolfei (strain DSM 2245B / Goettingen).